A 152-amino-acid polypeptide reads, in one-letter code: Large ribosomal subunit protein bL9 (152 aa).

The tract at residues 41–61 is disordered; the sequence is QSAMSQLNAERKAEQRREAEE. Residues 49–61 are compositionally biased toward basic and acidic residues; the sequence is AERKAEQRREAEE.

The protein belongs to the bacterial ribosomal protein bL9 family.

In terms of biological role, binds to the 23S rRNA. In Levilactobacillus brevis (strain ATCC 367 / BCRC 12310 / CIP 105137 / JCM 1170 / LMG 11437 / NCIMB 947 / NCTC 947) (Lactobacillus brevis), this protein is Large ribosomal subunit protein bL9.